Consider the following 722-residue polypeptide: MFNIHSVEIDWGGRPLKLETGKVARQADGAVVATYGETVVLATVVAAKSPREGVDFLPLTVDYQEKAYAAGRIPGGYFKREGRPTEKETLVSRLIDRPIRPLFADGWRNETQVIVTVLSHDMENDPDVLAMVAASAALTLSGVPFKGPIGAARVGFINDEYVLNPVLDEMAETQLELVVAGTADAVLMVESEAKELSEEIMLGAVMFGHRHFQPVIDAIIDLAEKAAKEPRELTVVDDSEIEKEMLGLVEQELRAAYAIPVKQDRYAAVGKVKEKAIAHFFPEGQEPKYDKLRIAGVFKELEAKIVRWNILDTGKRIDGRDSKTVRNILAQVGVLPRTHGSALFTRGETQALVVTTLGTGEDEQYVDSLSGTYKETFLLHYNFPPYSVGETGRLGGTKRREIGHGKLAWRAIHPVLPPHHEFPYTIRVVSEITESNGSSSMASVCGASLALMDAGVPLKRPTAGIAMGLILEGERFAVLSDILGDEDHLGDMDFKVAGTEQGITSLQMDIKIAGITEEIMKVALGQAKDGRIHILGEMSKALDRARAELGEHAPRIETFKIPTDKIREVIGTGGKVIREIVEKTGAKVNIEDDGTVKVASSDGESIKAAIKWIKSIASDPEIGEIYEGTVVKVMEFGAFVNFFGAKDGLVHISQLAAGRVQKTSDVVKEGDKVKVKLLGFDDRGKTRLSMKVVDQTTGEDLEAKQKAEAKAEGEAPAQAAGE.

The Mg(2+) site is built by Asp-487 and Asp-493. In terms of domain architecture, KH spans 554-613 (PRIETFKIPTDKIREVIGTGGKVIREIVEKTGAKVNIEDDGTVKVASSDGESIKAAIKWI). The region spanning 623-691 (GEIYEGTVVK…DRGKTRLSMK (69 aa)) is the S1 motif domain. The disordered stretch occupies residues 697-722 (TGEDLEAKQKAEAKAEGEAPAQAAGE). Basic and acidic residues predominate over residues 701–713 (LEAKQKAEAKAEG).

The protein belongs to the polyribonucleotide nucleotidyltransferase family. Mg(2+) is required as a cofactor.

The protein localises to the cytoplasm. The catalysed reaction is RNA(n+1) + phosphate = RNA(n) + a ribonucleoside 5'-diphosphate. In terms of biological role, involved in mRNA degradation. Catalyzes the phosphorolysis of single-stranded polyribonucleotides processively in the 3'- to 5'-direction. The protein is Polyribonucleotide nucleotidyltransferase of Rhodopseudomonas palustris (strain TIE-1).